The following is a 403-amino-acid chain: Ribosomal RNA large subunit methyltransferase I (403 aa).

Residues 9-88 form the PUA domain; that stretch reads YPRLVLSKGR…ESIDIAFFTR (80 aa).

The protein belongs to the methyltransferase superfamily. RlmI family.

The protein resides in the cytoplasm. It catalyses the reaction cytidine(1962) in 23S rRNA + S-adenosyl-L-methionine = 5-methylcytidine(1962) in 23S rRNA + S-adenosyl-L-homocysteine + H(+). Its function is as follows. Specifically methylates the cytosine at position 1962 (m5C1962) of 23S rRNA. The chain is Ribosomal RNA large subunit methyltransferase I from Salmonella choleraesuis (strain SC-B67).